The primary structure comprises 347 residues: Dihydroorotase (347 aa).

Zn(2+) is bound by residues His-14 and His-16. Residues 16–18 and Asn-42 each bind substrate; that span reads HLR. Positions 100, 137, and 175 each coordinate Zn(2+). An N6-carboxylysine modification is found at Lys-100. His-137 contacts substrate. Leu-220 contributes to the substrate binding site. Position 248 (Asp-248) interacts with Zn(2+). Residue Asp-248 is part of the active site. 2 residues coordinate substrate: His-252 and Ala-264.

Belongs to the metallo-dependent hydrolases superfamily. DHOase family. Class II DHOase subfamily. Homodimer. Zn(2+) is required as a cofactor.

It carries out the reaction (S)-dihydroorotate + H2O = N-carbamoyl-L-aspartate + H(+). The protein operates within pyrimidine metabolism; UMP biosynthesis via de novo pathway; (S)-dihydroorotate from bicarbonate: step 3/3. Its function is as follows. Catalyzes the reversible cyclization of carbamoyl aspartate to dihydroorotate. The polypeptide is Dihydroorotase (Jannaschia sp. (strain CCS1)).